Reading from the N-terminus, the 433-residue chain is Enolase (433 aa).

Position 163 (Gln163) interacts with (2R)-2-phosphoglycerate. Glu205 (proton donor) is an active-site residue. Mg(2+)-binding residues include Asp242, Glu285, and Asp312. Residues Lys337, Arg366, Ser367, and Lys388 each coordinate (2R)-2-phosphoglycerate. The Proton acceptor role is filled by Lys337.

This sequence belongs to the enolase family. Mg(2+) is required as a cofactor.

It is found in the cytoplasm. Its subcellular location is the secreted. The protein localises to the cell surface. It carries out the reaction (2R)-2-phosphoglycerate = phosphoenolpyruvate + H2O. Its pathway is carbohydrate degradation; glycolysis; pyruvate from D-glyceraldehyde 3-phosphate: step 4/5. Catalyzes the reversible conversion of 2-phosphoglycerate (2-PG) into phosphoenolpyruvate (PEP). It is essential for the degradation of carbohydrates via glycolysis. The protein is Enolase of Lawsonia intracellularis (strain PHE/MN1-00).